Here is a 228-residue protein sequence, read N- to C-terminus: Urease accessory protein UreF (228 aa).

Belongs to the UreF family. In terms of assembly, ureD, UreF and UreG form a complex that acts as a GTP-hydrolysis-dependent molecular chaperone, activating the urease apoprotein by helping to assemble the nickel containing metallocenter of UreC. The UreE protein probably delivers the nickel.

The protein localises to the cytoplasm. Required for maturation of urease via the functional incorporation of the urease nickel metallocenter. This chain is Urease accessory protein UreF, found in Blochmanniella pennsylvanica (strain BPEN).